Reading from the N-terminus, the 139-residue chain is Large ribosomal subunit protein bL17 (139 aa).

A disordered region spans residues 120–139; it reads ESAKGQDSGPVHVEGDEEAA.

It belongs to the bacterial ribosomal protein bL17 family. In terms of assembly, part of the 50S ribosomal subunit. Contacts protein L32.

In Parvibaculum lavamentivorans (strain DS-1 / DSM 13023 / NCIMB 13966), this protein is Large ribosomal subunit protein bL17.